The chain runs to 4080 residues: Hybrid PKS-NRPS synthetase poxE (4080 aa).

The 435-residue stretch at 8–442 (REPIAIVGSG…GTNAHAIIEA (435 aa)) folds into the Ketosynthase family 3 (KS3) domain. Residues Cys181, His320, and His362 each act as for beta-ketoacyl synthase activity in the active site. The segment at 554–878 (VFTGQGAQWA…QRGMNDVEAM (325 aa)) is malonyl-CoA:ACP transacylase (MAT) domain. The segment at 944–1078 (HPILGTRCPD…GRLVITYGPV (135 aa)) is N-terminal hotdog fold. Positions 944-1246 (HPILGTRCPD…AVPLEATNAD (303 aa)) constitute a PKS/mFAS DH domain. The interval 945–1243 (PILGTRCPDG…GIHAVPLEAT (299 aa)) is dehydratase (DH) domain. The Proton acceptor; for dehydratase activity role is filled by His976. The segment at 1093-1246 (MVDVPSERFY…AVPLEATNAD (154 aa)) is C-terminal hotdog fold. Asp1152 (proton donor; for dehydratase activity) is an active-site residue. Residues 1400-1585 (HFSDYLASVV…GVDTFTSDAD (186 aa)) form a methyltransferase (MT) domain region. Residues 2118 to 2292 (TYWLVGLTGS…AGSVMNIGAI (175 aa)) form a ketoreductase (KR)domain region. The peptidyl carrier protein stretch occupies residues 2399-2478 (TTDEIYEVIK…TIGEIIKFVL (80 aa)). Residues 2405 to 2481 (EVIKECFIVK…EIIKFVLEKL (77 aa)) form the Carrier 1 domain. Ser2441 is subject to O-(pantetheine 4'-phosphoryl)serine. Residues 2488 to 2569 (SLGLSPPTGA…AASPSIHTEE (82 aa)) are disordered. Residues 2511 to 2525 (VVVERRNVPRLEKKI) are compositionally biased toward basic and acidic residues. Low complexity predominate over residues 2528 to 2545 (SAGSRTSSSVTGTSKSVS). Residues 2551 to 2565 (DTASSQTSEAASPSI) show a composition bias toward polar residues. Positions 2607 to 3036 (KEPLSFGQSR…DSKQPGGHVS (430 aa)) are condensation. An adenylation region spans residues 3069 to 3478 (DMAKQYPQKL…DGRLRIEGRI (410 aa)). Residues 3593-3673 (AHLNEAQAQM…KMALLIKPQE (81 aa)) form the Carrier 2 domain. The segment at 3598-3670 (AQAQMVQLWE…TLEKMALLIK (73 aa)) is thiolation. Ser3633 carries the post-translational modification O-(pantetheine 4'-phosphoryl)serine. Residues 3740 to 3959 (LTGATGFIGQ…DFVPVEQVVR (220 aa)) are reductase (RED) domain.

It in the C-terminal section; belongs to the NRP synthetase family.

It participates in secondary metabolite biosynthesis. Hybrid PKS-NRPS synthetase; part of the gene cluster that mediates the biosynthesis of oxaleimides, cytotoxic compounds containing an unusual disubstituted succinimide moiety. The first step of the pathway is provided by the HR-PKS poxF that serves in a new mode of collaborative biosynthesis with the PKS-NRPS poxE, by providing the olefin containing amino acid substrate via the synthesis of an ACP-bound dec-4-enoate. The cytochrome P450 monooxygenase poxM-catalyzed oxidation at the alpha-position creates the enzyme-bound 2-hydroxydec-4-enoyl-ACP thioester, which may be prone to spontaneous hydrolysis to yield 2-hydroxydec-4-enoic acid due to increased electrophilicity of the carbonyl. 2-hydroxydec-4-enoic acid can then be further oxidized by poxM to yield the alpha-ketoacid 2-oxodec-4-enoicacid, which is reductively aminated by the aminotransferase poxL to yield (S,E)-2-aminodec-4-enoic acid. The Hybrid PKS-NRPS synthetase poxE then performs condensation between the octaketide product of its PKS modules and the amino group of (S,E)-2-aminodec-4-enoic acid which is activated and incorporated by the adenylation domain. The resulting aminoacyl product can be cyclized by the Diels-Alderase PoxQ and reductively released by the reductive (R) domain of poxE to yield an aldehyde intermediate. The released aldehyde is then substrate for a Knoevenagel condensation by the hydrolyase poxO followed by an oxidation at the 5-position of the pyrrolidone ring. The presence of the olefin from the amino acid building block allows for migration of the substituted allyl group to occur. This allylic transposition reaction takes place in a conjugate addition, semipinacol-like fashion to yield a succinimide intermediate. Iterative two-electron oxidations of the C7 methyl of the succinimide intermediate to the carboxylic acid can be catalyzed by one of two remaining cytochrome P450 monooxygenasess poxC or poxD to yield oxaleimide A. Subsequent oxidation yields the maleimide scaffold oxaleimide I. Both oxaleimide A and oxaleimide I can undergo oxidative modifications in the decalin ring to yield the series of products oxaleimides B to H. The chain is Hybrid PKS-NRPS synthetase poxE from Penicillium oxalicum (strain 114-2 / CGMCC 5302) (Penicillium decumbens).